Here is a 714-residue protein sequence, read N- to C-terminus: K(+)-insensitive pyrophosphate-energized proton pump (714 aa).

A signal peptide spans 1–20; sequence MRMTVIPIVILCGVLSVVYA. Helical transmembrane passes span 52 to 74, 85 to 105, 128 to 148, and 166 to 186; these read LTRQYLTIAIVGLIVAVLAWYLL, GAVLSGVAGFVGMHVSVRANL, ITGMLVAGLALLGVSIYYFVL, and VSLGFGASLISIFARLGGGIF. Residue K188 participates in substrate binding. The Mg(2+) site is built by D191, D195, N218, and D221. 6 helical membrane-spanning segments follow: residues 238-258, 263-283, 298-318, 333-353, 383-403, and 411-431; these read AVSVVATMVLAAIFFAGTPIL, VYPLAICGACILTSIAGTFFV, GLIATGVFSVAGLAVATYATV, GTNLFFCGLVGLVVTALIVVI, GLAVSLESTALPAIVIVGGII, and LFGTGIAVTAMLGLAGMIVAL. A Mg(2+)-binding site is contributed by D439. Transmembrane regions (helical) follow at residues 470 to 490, 522 to 542, 591 to 611, and 618 to 638; these read AVTKGYAIGSAGLGALVLFAA, YVVAGLLFGGLIPYLFGGIAM, VIPSLLPVLAPLVVYFGVLLI, and AFAALGASLLGVIINGLFVAI. Ca(2+) contacts are provided by D648, D680, and D684. Residue K687 coordinates substrate. The helical transmembrane segment at 693–713 threads the bilayer; the sequence is AVNPAIKITNIVALLLLAVLA.

Belongs to the H(+)-translocating pyrophosphatase (TC 3.A.10) family. K(+)-insensitive subfamily. In terms of assembly, homodimer. The cofactor is Mg(2+).

Its subcellular location is the acidocalcisome membrane. The catalysed reaction is diphosphate + H2O + H(+)(in) = 2 phosphate + 2 H(+)(out). Its function is as follows. Proton pump that utilizes the energy of pyrophosphate hydrolysis as the driving force for proton movement across the membrane. Generates a proton motive force. The sequence is that of K(+)-insensitive pyrophosphate-energized proton pump from Agrobacterium fabrum (strain C58 / ATCC 33970) (Agrobacterium tumefaciens (strain C58)).